The following is a 453-amino-acid chain: UDP-N-acetylmuramoylalanine--D-glutamate ligase (453 aa).

Residue 119–125 (GSNGKTT) participates in ATP binding.

It belongs to the MurCDEF family.

Its subcellular location is the cytoplasm. The catalysed reaction is UDP-N-acetyl-alpha-D-muramoyl-L-alanine + D-glutamate + ATP = UDP-N-acetyl-alpha-D-muramoyl-L-alanyl-D-glutamate + ADP + phosphate + H(+). Its pathway is cell wall biogenesis; peptidoglycan biosynthesis. Its function is as follows. Cell wall formation. Catalyzes the addition of glutamate to the nucleotide precursor UDP-N-acetylmuramoyl-L-alanine (UMA). The protein is UDP-N-acetylmuramoylalanine--D-glutamate ligase of Streptococcus uberis (strain ATCC BAA-854 / 0140J).